We begin with the raw amino-acid sequence, 120 residues long: Dihydroneopterin aldolase (120 aa).

The substrate site is built by glutamate 20 and methionine 114.

This sequence belongs to the archaeal dihydroneopterin aldolase family. Homotetramer.

It catalyses the reaction 7,8-dihydroneopterin = 6-hydroxymethyl-7,8-dihydropterin + glycolaldehyde. Functionally, catalyzes the conversion of 7,8-dihydroneopterin (H2Neo) to 6-hydroxymethyl-7,8-dihydropterin (6-HMD). This is Dihydroneopterin aldolase from Picrophilus torridus (strain ATCC 700027 / DSM 9790 / JCM 10055 / NBRC 100828 / KAW 2/3).